A 484-amino-acid polypeptide reads, in one-letter code: tRNA sulfurtransferase (484 aa).

A THUMP domain is found at 63–167 (QAFGERLACI…GDKLYMVTKR (105 aa)). ATP-binding positions include 185–186 (LI), lysine 267, glycine 289, and glutamine 298. Residues cysteine 346 and cysteine 458 are joined by a disulfide bond. The Rhodanese domain occupies 406-484 (IDTNEVVIDI…GYHNVKVYRP (79 aa)). The active-site Cysteine persulfide intermediate is the cysteine 458.

This sequence belongs to the ThiI family.

It localises to the cytoplasm. The catalysed reaction is [ThiI sulfur-carrier protein]-S-sulfanyl-L-cysteine + a uridine in tRNA + 2 reduced [2Fe-2S]-[ferredoxin] + ATP + H(+) = [ThiI sulfur-carrier protein]-L-cysteine + a 4-thiouridine in tRNA + 2 oxidized [2Fe-2S]-[ferredoxin] + AMP + diphosphate. It carries out the reaction [ThiS sulfur-carrier protein]-C-terminal Gly-Gly-AMP + S-sulfanyl-L-cysteinyl-[cysteine desulfurase] + AH2 = [ThiS sulfur-carrier protein]-C-terminal-Gly-aminoethanethioate + L-cysteinyl-[cysteine desulfurase] + A + AMP + 2 H(+). It participates in cofactor biosynthesis; thiamine diphosphate biosynthesis. Catalyzes the ATP-dependent transfer of a sulfur to tRNA to produce 4-thiouridine in position 8 of tRNAs, which functions as a near-UV photosensor. Also catalyzes the transfer of sulfur to the sulfur carrier protein ThiS, forming ThiS-thiocarboxylate. This is a step in the synthesis of thiazole, in the thiamine biosynthesis pathway. The sulfur is donated as persulfide by IscS. This is tRNA sulfurtransferase from Shewanella sp. (strain ANA-3).